A 545-amino-acid chain; its full sequence is Glucose-6-phosphate isomerase (545 aa).

Residue E351 is the Proton donor of the active site. Catalysis depends on residues H382 and K510.

It belongs to the GPI family.

Its subcellular location is the cytoplasm. It catalyses the reaction alpha-D-glucose 6-phosphate = beta-D-fructose 6-phosphate. The protein operates within carbohydrate biosynthesis; gluconeogenesis. Its pathway is carbohydrate degradation; glycolysis; D-glyceraldehyde 3-phosphate and glycerone phosphate from D-glucose: step 2/4. Catalyzes the reversible isomerization of glucose-6-phosphate to fructose-6-phosphate. This chain is Glucose-6-phosphate isomerase, found in Shewanella sp. (strain MR-4).